Here is a 341-residue protein sequence, read N- to C-terminus: MLVLGLETSCDETGVALYDSERGLLADALFSQIDLHRIYGGVVPELASRDHVKRMLPLIRQVLDEAGREPSDIDALAYTAGPGLVGALLVGASCAQALAFAWGVPAVGVHHMEGHLLAPMLEEQPPAFPFVALLVSGGHTQLVRVDGIGQYQLLGESLDDAAGEAFDKTAKLMGLNYPGGPEIAKLAEQGTPGRFVFPRPMTDRPGLDFSFSGLKTFALNTWQQCRDSGDDLDQARRDIALAFQQAVVETLTIKCKRALKQTGLNSLVIAGGVSANKALREHLERMLGELKGKVFYARPRFCTDNGAMIAYAGCQRLLAGQHEDLAIKVQARWPMESLPAL.

2 residues coordinate Fe cation: H111 and H115. Substrate contacts are provided by residues 134 to 138, D167, G180, and N276; that span reads LVSGG. D304 is a binding site for Fe cation.

This sequence belongs to the KAE1 / TsaD family. Fe(2+) is required as a cofactor.

It localises to the cytoplasm. It catalyses the reaction L-threonylcarbamoyladenylate + adenosine(37) in tRNA = N(6)-L-threonylcarbamoyladenosine(37) in tRNA + AMP + H(+). Its function is as follows. Required for the formation of a threonylcarbamoyl group on adenosine at position 37 (t(6)A37) in tRNAs that read codons beginning with adenine. Is involved in the transfer of the threonylcarbamoyl moiety of threonylcarbamoyl-AMP (TC-AMP) to the N6 group of A37, together with TsaE and TsaB. TsaD likely plays a direct catalytic role in this reaction. The polypeptide is tRNA N6-adenosine threonylcarbamoyltransferase (Ectopseudomonas mendocina (strain ymp) (Pseudomonas mendocina)).